The following is a 369-amino-acid chain: Probable serine/threonine-protein kinase FMP48 (369 aa).

One can recognise a Protein kinase domain in the interval 2-369; the sequence is YTKLRSIQSG…EKPCLIQDGK (368 aa). Residues 8–16 and Lys31 contribute to the ATP site; that span reads IQSGTFSTV. The active-site Proton acceptor is Asp133.

Belongs to the protein kinase superfamily. Ser/Thr protein kinase family.

The protein resides in the mitochondrion. It catalyses the reaction L-seryl-[protein] + ATP = O-phospho-L-seryl-[protein] + ADP + H(+). It carries out the reaction L-threonyl-[protein] + ATP = O-phospho-L-threonyl-[protein] + ADP + H(+). The protein is Probable serine/threonine-protein kinase FMP48 (FMP48) of Saccharomyces cerevisiae (strain ATCC 204508 / S288c) (Baker's yeast).